Here is a 452-residue protein sequence, read N- to C-terminus: Bis(5'-adenosyl)-triphosphatase enpp4 (452 aa).

The first 19 residues, 1 to 19 (MFGRVFIVAVLYCITICKG), serve as a signal peptide directing secretion. Topologically, residues 20–407 (EDPTNSSTPK…NQWCIQVSEA (388 aa)) are extracellular. Asn24 carries N-linked (GlcNAc...) asparagine glycosylation. Residues Asp36 and Thr72 each coordinate Zn(2+). Thr72 serves as the catalytic AMP-threonine intermediate. Residue Asn93 participates in substrate binding. Residue Asn107 is glycosylated (N-linked (GlcNAc...) asparagine). Residue Tyr154 participates in substrate binding. Asn155 and Asn175 each carry an N-linked (GlcNAc...) asparagine glycan. Zn(2+) contacts are provided by Asp189 and His193. Residue Asp189 coordinates substrate. Asn202 carries N-linked (GlcNAc...) asparagine glycosylation. Zn(2+)-binding residues include Asp237 and His238. A disulfide bond links Cys254 and Cys287. Asn259 and Asn327 each carry an N-linked (GlcNAc...) asparagine glycan. A Zn(2+)-binding site is contributed by His336. N-linked (GlcNAc...) asparagine glycosylation occurs at Asn386. A disulfide bridge links Cys394 with Cys401. A helical transmembrane segment spans residues 408 to 428 (IGIVIGAIMVLTTLTCIIIML). Over 429–452 (KKKMPSARPFSRLQFQDDDDPLIG) the chain is Cytoplasmic.

The protein belongs to the nucleotide pyrophosphatase/phosphodiesterase family. It depends on Zn(2+) as a cofactor.

Its subcellular location is the cell membrane. It catalyses the reaction P(1),P(3)-bis(5'-adenosyl) triphosphate + H2O = AMP + ADP + 2 H(+). In terms of biological role, hydrolyzes extracellular Ap3A into AMP and ADP, and Ap4A into AMP and ATP. Ap3A and Ap4A are diadenosine polyphosphates thought to induce proliferation of vascular smooth muscle cells. Acts as a procoagulant, mediating platelet aggregation at the site of nascent thrombus via release of ADP from Ap3A and activation of ADP receptors. In Xenopus laevis (African clawed frog), this protein is Bis(5'-adenosyl)-triphosphatase enpp4 (enpp4).